The following is a 336-amino-acid chain: Di/tripeptide transport system permease protein DppB (336 aa).

6 consecutive transmembrane segments (helical) span residues 10–30 (GLLI…IRLI), 102–122 (LSLA…VIAA), 145–165 (IFWW…WTPV), 198–218 (AVRH…AVIA), 257–277 (LIPV…GAVL), and 307–327 (ILLV…LYGL). The ABC transmembrane type-1 domain occupies 96–325 (FPATLELSLA…LVNFVVDILY (230 aa)).

Belongs to the binding-protein-dependent transport system permease family. OppBC subfamily. In terms of assembly, the complex is composed of two ATP-binding proteins (DppD and DppF), two transmembrane proteins (DppB and DppC) and a solute-binding protein (DppA1-A5). Five orthologous SBPs (DppA1-A5) are present in P.aeruginosa, which increases the substrate specificity of the DppBCDF transporter.

It localises to the cell inner membrane. In terms of biological role, part of the ABC transporter DppABCDF involved in the uptake of various di/tripeptides. Is also involved in the uptake of phaseolotoxin, a toxic tripeptide inhibiting the enzyme ornithine carbamoyltransferase. Responsible for the translocation of the substrate across the membrane. The protein is Di/tripeptide transport system permease protein DppB of Pseudomonas aeruginosa (strain UCBPP-PA14).